We begin with the raw amino-acid sequence, 193 residues long: Cbp/p300-interacting transactivator 1 (193 aa).

Disordered regions lie at residues 1-26 (MPTT…NQEM), 50-88 (VASN…LHPA), and 106-147 (GMAA…SPAI). Residues 54–73 (GTKASGAPTSSSGSPIGSPT) show a composition bias toward low complexity. Positions 158–167 (LMSLVVELGL) match the Nuclear export signal motif.

It belongs to the CITED family. Interacts (via C-terminus) with CREBBP. Interacts with EGR2. Homodimer. Binds to RBM14. Interacts (via N-terminus) with HSPA8; the interaction suppresses the association of CITED1 with p300/CBP and SMAD-mediated transcription transactivation. Interacts (via C-terminus) with TOX3 (via HGM box); the interaction increases estrogen-response element (ERE)-dependent transcription and protection against cell death. Interacts with ESR1; the interaction occurs in a estrogen-dependent manner. Interacts (unphosphorylated form preferentially and via C-terminus) with EP300. In terms of processing, phosphorylated. Phosphorylation changes in a cell cycle-dependent manner and reduces its transcriptional coactivator activity. Expressed only in melanocytes and testis.

Its subcellular location is the nucleus. The protein resides in the cytoplasm. In terms of biological role, transcriptional coactivator of the p300/CBP-mediated transcription complex. Enhances SMAD-mediated transcription by strengthening the functional link between the DNA-binding SMAD transcription factors and the p300/CBP transcription coactivator complex. Stimulates estrogen-dependent transactivation activity mediated by estrogen receptors signaling; stabilizes the interaction of estrogen receptor ESR1 and histone acetyltransferase EP300. Positively regulates TGF-beta signaling through its association with the SMAD/p300/CBP-mediated transcriptional coactivator complex. Induces transcription from estrogen-responsive promoters and protection against cell death. Potentiates EGR2-mediated transcriptional activation activity from the ERBB2 promoter. Acts as an inhibitor of osteoblastic mineralization through a cAMP-dependent parathyroid hormone receptor signaling. May play a role in pigmentation of melanocytes. Associates with chromatin to the estrogen-responsive TGF-alpha promoter region in a estrogen-dependent manner. The chain is Cbp/p300-interacting transactivator 1 (CITED1) from Homo sapiens (Human).